We begin with the raw amino-acid sequence, 205 residues long: Peptidyl-tRNA hydrolase (205 aa).

A tRNA-binding site is contributed by Tyr18. His23 (proton acceptor) is an active-site residue. Residues Tyr69, Asn71, and Asn117 each contribute to the tRNA site.

It belongs to the PTH family. As to quaternary structure, monomer.

It is found in the cytoplasm. The catalysed reaction is an N-acyl-L-alpha-aminoacyl-tRNA + H2O = an N-acyl-L-amino acid + a tRNA + H(+). Hydrolyzes ribosome-free peptidyl-tRNAs (with 1 or more amino acids incorporated), which drop off the ribosome during protein synthesis, or as a result of ribosome stalling. Functionally, catalyzes the release of premature peptidyl moieties from peptidyl-tRNA molecules trapped in stalled 50S ribosomal subunits, and thus maintains levels of free tRNAs and 50S ribosomes. In Thermosynechococcus vestitus (strain NIES-2133 / IAM M-273 / BP-1), this protein is Peptidyl-tRNA hydrolase.